We begin with the raw amino-acid sequence, 154 residues long: Urease accessory protein UreE (154 aa).

This sequence belongs to the UreE family.

The protein resides in the cytoplasm. Its function is as follows. Involved in urease metallocenter assembly. Binds nickel. Probably functions as a nickel donor during metallocenter assembly. This chain is Urease accessory protein UreE, found in Escherichia coli O157:H7.